The following is an 87-amino-acid chain: MMKTKSEVLIFFFTLVLLLSMASSVILREDGFAPPKPSPTTHEKASTKGDRDGVECKNSDSEEECLVKKTVAAHTDYIYTQDLNLSP.

An N-terminal signal peptide occupies residues 1 to 24; sequence MMKTKSEVLIFFFTLVLLLSMASS. Positions 25–76 are excised as a propeptide; it reads VILREDGFAPPKPSPTTHEKASTKGDRDGVECKNSDSEEECLVKKTVAAHTD. Positions 31-59 are disordered; it reads GFAPPKPSPTTHEKASTKGDRDGVECKNS. Residues 41–59 are compositionally biased toward basic and acidic residues; sequence THEKASTKGDRDGVECKNS. Sulfotyrosine is present on residues tyrosine 77 and tyrosine 79. Positions 82-87 are excised as a propeptide; the sequence is DLNLSP.

Belongs to the phytosulfokine family. In terms of processing, sulfation is important for activity and for the binding to a putative membrane receptor. PSK-beta is produced from PSK-alpha by exopeptidase digestion. Expressed only in roots.

It is found in the secreted. Its function is as follows. Promotes plant cell differentiation, organogenesis and somatic embryogenesis as well as cell proliferation. The protein is Phytosulfokines 1 (PSK1) of Arabidopsis thaliana (Mouse-ear cress).